A 285-amino-acid chain; its full sequence is Complement C1q tumor necrosis factor-related protein 2 (285 aa).

A signal peptide spans 1 to 15 (MIPWVLLACALPCAA). Residues 33 to 144 (QLVCSLPGPQ…PGLPGPCSCG (112 aa)) are disordered. A Collagen-like domain is found at 40–141 (GPQGPPGPPG…KGEPGLPGPC (102 aa)). Positions 41-51 (PQGPPGPPGAP) are enriched in pro residues. The span at 53-65 (PSGMMGRMGFPGK) shows a compositional bias: low complexity. Over residues 66 to 78 (DGQDGHDGDRGDS) the composition is skewed to basic and acidic residues. Residues 84-120 (PGRTGNRGKPGPKGKAGAIGRAGPRGPKGVNGTPGKH) are compositionally biased toward low complexity. The C1q domain occupies 145 to 281 (SGHTKSAFSV…GFLIYADQDD (137 aa)).

In terms of assembly, may interact with ERFE. Expressed in adipose tissue.

It localises to the secreted. Involved in the regulation of lipid metabolism in adipose tissue and liver. The sequence is that of Complement C1q tumor necrosis factor-related protein 2 (C1QTNF2) from Homo sapiens (Human).